The sequence spans 3175 residues: Replicase polyprotein 1ab (3175 aa).

The C4-type; atypical zinc finger occupies 25–44 (CEHGAGLCCEVDGSTLCAEC). In terms of domain architecture, Peptidase C31 spans 66–156 (SPVPVGHKFL…PAANSLIVTT (91 aa)). Positions 157-260 (DQEQDGFCWL…WSCLPAGNYG (104 aa)) constitute a Peptidase C32 domain. Residues cysteine 164 and histidine 230 each act as for Nsp1 papain-like cysteine proteinase activity in the active site. Residues 261–339 (GYNPPGDGAC…KQHWRVKRAK (79 aa)) form an OTU-like region. The Peptidase C33 domain occupies 261–360 (GYNPPGDGAC…RGICNCQRMS (100 aa)). The active-site For Nsp2 cysteine proteinase activity is cysteine 270. Cysteine 319 provides a ligand contact to Zn(2+). The active-site For Nsp2 cysteine proteinase activity is the histidine 332. Residues cysteine 349, cysteine 354, and cysteine 356 each contribute to the Zn(2+) site. The tract at residues 386 to 451 (VVTPEGQPRP…TRLQGASTQE (66 aa)) is disordered. 7 helical membrane-spanning segments follow: residues 530–550 (AVIACLLPIWPSLALLLSFAI), 551–571 (GLIPSVGNNVVLTALLVSSAN), 625–645 (FDAAYVPCTVFDLCSFAILYL), 829–849 (LIGGWIYGICYFVLVVVSTFT), 903–923 (YWIAAVTSGLVILLVCHRLAI), 935–955 (LVLLVFPWASVGLLLACSLAG), and 977–997 (LVTMGYWACVAALAVYSLMGL). Residues 530-645 (AVIACLLPIW…DLCSFAILYL (116 aa)) are HD1. The segment at 829–997 (LIGGWIYGIC…ALAVYSLMGL (169 aa)) is HD2. Positions 1065–1268 (GLFRSPKARG…MLIDGLSNRE (204 aa)) constitute a Peptidase S32 domain. Catalysis depends on charge relay system; for 3C-like serine proteinase activity residues histidine 1103, aspartate 1129, and serine 1184. The next 4 helical transmembrane spans lie at 1291 to 1311 (AYLPYVLGFFAANFFLPKSVG), 1333 to 1353 (CLFHLVCATVTGNVISLWFYI), 1355 to 1375 (AAGTSYLSEMWFGGYPTMLFV), and 1385 to 1405 (GWAIGTVLAVCSITMLAAALG). Positions 1291–1405 (AYLPYVLGFF…SITMLAAALG (115 aa)) are HD3. N-linked (GlcNAc...) asparagine; by host glycosylation is present at asparagine 1501. Positions 1577–1614 (NDTPVKPMPSRRRRKGLPKGAQLEWDRHQEEKRNAGDD) are disordered. Residues 1600 to 1612 (EWDRHQEEKRNAG) are compositionally biased toward basic and acidic residues. In terms of domain architecture, NiRAN spans 1716–1883 (LANPVEAVNQ…DKVAAAVSGD (168 aa)). A RdRp catalytic domain is found at 2116-2251 (KYCLETDLES…TTPNQHYAAS (136 aa)). The AV ZBD domain occupies 2371–2438 (SAVCTVCGAA…SPKQMVPKVP (68 aa)). The Zn(2+) site is built by cysteine 2374, cysteine 2377, cysteine 2387, cysteine 2392, cysteine 2395, histidine 2399, histidine 2402, cysteine 2403, cysteine 2412, histidine 2414, cysteine 2423, and cysteine 2426. Positions 2496-2661 (PGSHIAVPLQ…LRHFVSLEPL (166 aa)) constitute a (+)RNA virus helicase ATP-binding domain. 2528-2535 (GPPGSGKT) contacts ATP. In terms of domain architecture, (+)RNA virus helicase C-terminal spans 2662 to 2793 (RVCHRFGAAV…PPTACHLGQE (132 aa)). The AV-Nsp11N/CoV-Nsp15M domain occupies 2840 to 2930 (KISCLPRVAQ…LTEWVDGKAR (91 aa)). A NendoU domain is found at 2932–3054 (LPDSLFSSGR…MVWRNATFYV (123 aa)). Active-site residues include histidine 2963, histidine 2978, and lysine 3007.

This sequence belongs to the arteriviridae polyprotein family. As to quaternary structure, nsp1 interacts with cellular transcription cofactor SND1/p100. Post-translationally, specific enzymatic cleavages in vivo by its own proteases yield mature proteins. There are two alternative pathways for processing. Either nsp4-5 is cleaved, which represents the major pathway or the nsp5-6 and nsp6-7 are processed, which represents the minor pathway. The major pathway occurs when nsp2 acts as a cofactor for nsp4.

Its subcellular location is the host nucleus. It localises to the host cytoplasm. The protein localises to the host membrane. The protein resides in the host perinuclear region. It catalyses the reaction RNA(n) + a ribonucleoside 5'-triphosphate = RNA(n+1) + diphosphate. The catalysed reaction is ATP + H2O = ADP + phosphate + H(+). It carries out the reaction Thiol-dependent hydrolysis of ester, thioester, amide, peptide and isopeptide bonds formed by the C-terminal Gly of ubiquitin (a 76-residue protein attached to proteins as an intracellular targeting signal).. The enzyme catalyses uridylyl-uridylyl-ribonucleotide-RNA = a 3'-end uridylyl-2',3'-cyclophospho-uridine-RNA + a 5'-end dephospho-ribonucleoside-RNA. Its function is as follows. The replicase polyprotein 1ab is a multifunctional protein: it contains the activities necessary for the transcription of negative stranded RNA, leader RNA, subgenomic mRNAs and progeny virion RNA as well as proteinases responsible for the cleavage of the polyprotein into functional products. Functionally, nsp1 is essential for viral subgenomic mRNA synthesis. Nsp2 cysteine proteinase which cleaves the nsp2/nsp3 site in the polyprotein. Also displays deubiquitinating and deISGylase activities. The deubiquitinating activity cleaves both ubiquitinated and ISGylated products and may therefore regulate ubiquitin and ISG15 dependent host innate immunity. In terms of biological role, the 3C-like serine proteinase chain is responsible for the majority of cleavages as it cleaves the C-terminus of the polyprotein. Its function is as follows. The helicase chain, which contains a zinc finger structure, displays RNA and DNA duplex-unwinding activities with 5' to 3' polarity. Functionally, plays a role in viral transcription/replication and prevents the simultaneous activation of host cell dsRNA sensors, such as MDA5/IFIH1, OAS, and PKR. Acts by degrading the 5'-polyuridines generated during replication of the poly(A) region of viral genomic and subgenomic RNAs. Catalyzes a two-step reaction in which a 2'3'-cyclic phosphate (2'3'-cP) is first generated by 2'-O transesterification, which is then hydrolyzed to a 3'-phosphate (3'-P). If not degraded, poly(U) RNA would hybridize with poly(A) RNA tails and activate host dsRNA sensors. This is Replicase polyprotein 1ab (rep) from Equidae (horses).